Reading from the N-terminus, the 295-residue chain is Small ribosomal subunit protein mS23 (295 aa).

Residues 249–295 (IGSVVEEEKSQSSLFEDLLSNDNLQSEPEVEQSGQQQQQEQPKQETN) are disordered. Residues 273–289 (QSEPEVEQSGQQQQQEQ) show a composition bias toward low complexity.

The protein belongs to the mitochondrion-specific ribosomal protein mS23 family. Component of the mitochondrial small ribosomal subunit (mt-SSU).

The protein resides in the mitochondrion. Functionally, component of the mitochondrial ribosome (mitoribosome), a dedicated translation machinery responsible for the synthesis of mitochondrial genome-encoded proteins, including at least some of the essential transmembrane subunits of the mitochondrial respiratory chain. The mitoribosomes are attached to the mitochondrial inner membrane and translation products are cotranslationally integrated into the membrane. The chain is Small ribosomal subunit protein mS23 (RSM25) from Candida albicans (strain SC5314 / ATCC MYA-2876) (Yeast).